Here is a 427-residue protein sequence, read N- to C-terminus: MAQIIDVQAREILDSRGNPTVEVEVLLDDASFGRAGVPSGASTGVHEAHELRDGGDRYLGKGVRQAVENVNEKIAPAVTGLEADDQRLVDKVMLDLDGSDNKSNLGANAILGVSLATAKAAASSANLELFRYLGGPNAHVLPVPMMNIVNGGAHADSGVDVQEFMIAPIGADSFREALRMGAEVYHNLKSVIKSKGLSTGLGDEGGFAPSVDSTKEALDLIAEAVKKAGYKLGEDIAFALDAASSEFYDKDKGVYNFEGGEHSAEDMVKVYEELVENYPIVSIEDPLQEDDWEGYTKLTAEIGDKVQIVGDDFFVTNPARLKEGIEKKAANALLVKVNQIGSLSETADAVQLAQNNNYRCMMSHRSGETEDTTIADLSVAYSCGQIKSGAPARSERVAKYNQLLRIEEFLGDAAVYAGRSAFPRFNG.

Position 162 (glutamine 162) interacts with (2R)-2-phosphoglycerate. The active-site Proton donor is the glutamate 204. Aspartate 241, glutamate 284, and aspartate 311 together coordinate Mg(2+). The (2R)-2-phosphoglycerate site is built by lysine 336, arginine 365, serine 366, and lysine 387. Catalysis depends on lysine 336, which acts as the Proton acceptor.

This sequence belongs to the enolase family. It depends on Mg(2+) as a cofactor.

It is found in the cytoplasm. The protein resides in the secreted. Its subcellular location is the cell surface. The enzyme catalyses (2R)-2-phosphoglycerate = phosphoenolpyruvate + H2O. It functions in the pathway carbohydrate degradation; glycolysis; pyruvate from D-glyceraldehyde 3-phosphate: step 4/5. Functionally, catalyzes the reversible conversion of 2-phosphoglycerate (2-PG) into phosphoenolpyruvate (PEP). It is essential for the degradation of carbohydrates via glycolysis. The protein is Enolase of Corynebacterium kroppenstedtii (strain DSM 44385 / JCM 11950 / CIP 105744 / CCUG 35717).